Here is a 611-residue protein sequence, read N- to C-terminus: MCGIVGAVAERNITAILIEGLKRLEYRGYDSAGLAVLTQNGELQRRRRIGKVSELEVAVADDPLAGQLGIAHTRWATHGAPTEGNAHPHFSGNDVAVVHNGIIENHEELREELKGLGYVFTSQTDTEVIVHLIHHTLKSIPDLTDALKAAVKRLHGAYGLALISAKQPDRLVAARSGSPLVIGLGLGENFLASDQLALRQVTDRFMYLEEGDIAEIRRDQVSIWDQQGNKVQRETVQYHEGAEAADKGAYRHFMLKEIHEQPSVVQRTLEGRLGKDNVLVQAFGPQAADLFAKVRNVQIVACGTSYHAGMVARYWLESLAGIPCQVEVASEFRYRKVVVQPDTLFVSISQSGETADTLAALRNAKELGFLGSLAICNVGISSLVRESDLTLLTLAGPEIGVASTKAFTTQLVSLMLLTLALGQVRGTLEAGVEAELVEELRRLPTRLGEALAMDATVEKIAELFADKHHTLFLGRGAQYPVAMEGALKLKEISYIHAEAYPAGELKHGPLALVDNDMPVVTVAPNNELLEKLKSNLQEVRARGGELVVFADEHAGMTNGEGTHVIKVPHIADALAPILYTIPLQLLSYYVAVLKGTDVDQPRNLAKSVTVE.

Catalysis depends on cysteine 2, which acts as the Nucleophile; for GATase activity. The 218-residue stretch at 2–219 (CGIVGAVAER…EGDIAEIRRD (218 aa)) folds into the Glutamine amidotransferase type-2 domain. SIS domains lie at 287–427 (AADL…VRGT) and 460–601 (IAEL…VDQP). Lysine 606 (for Fru-6P isomerization activity) is an active-site residue.

As to quaternary structure, homodimer.

It localises to the cytoplasm. It catalyses the reaction D-fructose 6-phosphate + L-glutamine = D-glucosamine 6-phosphate + L-glutamate. Catalyzes the first step in hexosamine metabolism, converting fructose-6P into glucosamine-6P using glutamine as a nitrogen source. In Pseudomonas putida (strain ATCC 47054 / DSM 6125 / CFBP 8728 / NCIMB 11950 / KT2440), this protein is Glutamine--fructose-6-phosphate aminotransferase [isomerizing].